The following is a 449-amino-acid chain: Neurexin-1a-beta (449 aa).

A signal peptide spans 1 to 38 (MLRLWPGGAPGGLASILLRISLRLALWLPPLTLGSALA). Residues 39–373 (EGPGELYVPQ…EVIRESSSTT (335 aa)) lie on the Extracellular side of the membrane. In terms of domain architecture, Laminin G-like spans 71-272 (TTYIFGRDGG…DPNVRVEGSA (202 aa)). The interval 276–366 (GDMPSSSITP…AKGYPSPEVI (91 aa)) is disordered. Over residues 280-311 (SSSITPQSSVSAAGNRSETSPSITDITTTTAS) the composition is skewed to low complexity. A compositionally biased stretch (polar residues) spans 312–322 (NRQGKQTTTPQ). The helical transmembrane segment at 374 to 394 (GMVVGIVAAAALCILILLYAM) threads the bilayer. The Cytoplasmic portion of the chain corresponds to 395–449 (YKYRNRDEGSYHVDESRNYISNSATQPNGAAVKEKPIGVPKNKKDKKNKDKEYYV). Residues 415-449 (SNSATQPNGAAVKEKPIGVPKNKKDKKNKDKEYYV) form a disordered region.

The protein belongs to the neurexin family.

The protein resides in the membrane. Its function is as follows. Neuronal cell surface protein that may be involved in cell recognition and cell adhesion. May play a role in formation or maintenance of synaptic junctions. The sequence is that of Neurexin-1a-beta (nrxn1a) from Danio rerio (Zebrafish).